The primary structure comprises 83 residues: Disintegrin isoform D-2 (83 aa).

Residues 2–83 form the Disintegrin domain; sequence PPVCGNELLE…GKSSDCPWNH (82 aa). Intrachain disulfides connect Cys5–Cys24, Cys16–Cys34, Cys18–Cys29, Cys28–Cys51, Cys42–Cys48, Cys47–Cys72, and Cys60–Cys79. Positions 64-66 match the Cell attachment site motif; sequence RGD.

It belongs to the venom metalloproteinase (M12B) family. P-II subfamily. P-IIa sub-subfamily. As to quaternary structure, monomer (disintegrin). Expressed by the venom gland.

The protein localises to the secreted. In terms of biological role, inhibits fibrinogen interaction with platelets. Acts by binding to the alpha-IIb/beta-3 (ITGA2B/ITGB3) on the platelet surface and inhibits aggregation induced by ADP, thrombin, platelet-activating factor and collagen. The sequence is that of Disintegrin isoform D-2 from Bitis arietans (African puff adder).